Here is a 436-residue protein sequence, read N- to C-terminus: GTPase Der (436 aa).

2 consecutive EngA-type G domains span residues 4–167 and 175–351; these read PTVA…PVEE and IRFS…ESQN. Residues 10 to 17, 57 to 61, 119 to 122, 181 to 188, 229 to 233, and 294 to 297 contribute to the GTP site; these read GRPNVGKS, DTGGI, NKVD, DTAGM, and NKWD. One can recognise a KH-like domain in the interval 352-436; it reads KRIPSAVLND…PIHLIARKRK (85 aa).

This sequence belongs to the TRAFAC class TrmE-Era-EngA-EngB-Septin-like GTPase superfamily. EngA (Der) GTPase family. In terms of assembly, associates with the 50S ribosomal subunit.

GTPase that plays an essential role in the late steps of ribosome biogenesis. This is GTPase Der from Streptococcus pyogenes serotype M1.